The following is a 60-amino-acid chain: Large ribosomal subunit protein uL30 (60 aa).

It belongs to the universal ribosomal protein uL30 family. Part of the 50S ribosomal subunit.

The sequence is that of Large ribosomal subunit protein uL30 from Shewanella sp. (strain ANA-3).